A 508-amino-acid chain; its full sequence is N-acetyl-D-hexosamine oxidase (508 aa).

The FAD-binding PCMH-type domain occupies 26–203 (TDAQAAGRIA…TAYTFARLPE (178 aa)). The segment at residues 64–123 (HCYEDFVSNNPDGAIVDLSLLNAPEVRADGTVRIPAGTQNWNGYLELYKRHNLTLPGGSC) is a cross-link (6-(S-cysteinyl)-8alpha-(pros-histidyl)-FAD (His-Cys)).

Belongs to the oxygen-dependent FAD-linked oxidoreductase family. FAD serves as cofactor.

The enzyme catalyses N-acetyl-D-glucosamine + O2 + H2O = N-acetyl-D-glucosaminate + H2O2 + H(+). It carries out the reaction N-acetyl-D-galactosamine + O2 + H2O = N-acetyl-D-galactosaminate + H2O2 + H(+). It catalyses the reaction N-acetyl-D-glucosamine + O2 = N-acetyl-D-glucosamino-1,5-lactone + H2O2. The catalysed reaction is N-acetyl-D-galactosamine + O2 = N-acetyl-D-galactosamino-1,5-lactone + H2O2. Catalyzes the oxidation of a range of monosaccharides in vitro, displaying the highest activity with N-acetylglucosamine (GlcNAc) and N-acetylgalactosamine (GalNAc), with a reduction of O2 to H2O2. Acts upon the C1 carbon of the GlcNAc or GalNAc molecule, producing the corresponding lactone, which can spontaneously hydrolyze. Its biological function is unclear, but its main function might be connected to extracellular production of hydrogen peroxide to compete with other organisms through oxidative stress, or support the action of peroxidases and peroxygenases. The polypeptide is N-acetyl-D-hexosamine oxidase (Ralstonia solanacearum (strain UW551)).